The following is a 1488-amino-acid chain: Chromosome partition protein MukB (1488 aa).

34–41 (GGNGAGKS) is a binding site for ATP. Coiled-coil stretches lie at residues 326 to 418 (LEAD…QYNQ), 444 to 472 (LDTF…QTAH), and 509 to 602 (RHLA…QRAP). The tract at residues 666–783 (PGGAEDQRLN…SLPIFGRAAR (118 aa)) is flexible hinge. Coiled-coil stretches lie at residues 835 to 923 (EAEI…AKLE), 977 to 1116 (EMLS…AKAG), and 1209 to 1265 (VEAI…LQSV). Residues 1049–1074 (ADSGAEERARQRRDELHAQLSNNRSR) are disordered. A compositionally biased stretch (basic and acidic residues) spans 1051 to 1065 (SGAEERARQRRDELH).

This sequence belongs to the SMC family. MukB subfamily. In terms of assembly, homodimerization via its hinge domain. Binds to DNA via its C-terminal region. Interacts, and probably forms a ternary complex, with MukE and MukF via its C-terminal region. The complex formation is stimulated by calcium or magnesium. Interacts with tubulin-related protein FtsZ.

The protein resides in the cytoplasm. It is found in the nucleoid. In terms of biological role, plays a central role in chromosome condensation, segregation and cell cycle progression. Functions as a homodimer, which is essential for chromosome partition. Involved in negative DNA supercoiling in vivo, and by this means organize and compact chromosomes. May achieve or facilitate chromosome segregation by condensation DNA from both sides of a centrally located replisome during cell division. This is Chromosome partition protein MukB from Salmonella arizonae (strain ATCC BAA-731 / CDC346-86 / RSK2980).